Consider the following 444-residue polypeptide: Deoxyguanosinetriphosphate triphosphohydrolase-like protein (444 aa).

The region spanning arginine 59 to alanine 250 is the HD domain.

Belongs to the dGTPase family. Type 2 subfamily.

The chain is Deoxyguanosinetriphosphate triphosphohydrolase-like protein from Shewanella halifaxensis (strain HAW-EB4).